A 295-amino-acid chain; its full sequence is Shikimate dehydrogenase (NADP(+)) (295 aa).

Shikimate-binding positions include 20–22 (SWS) and Thr68. The Proton acceptor role is filled by Lys72. Shikimate contacts are provided by Asn93 and Asp108. Residues 132-136 (GNGGA) and Met234 each bind NADP(+). Tyr236 is a shikimate binding site. An NADP(+)-binding site is contributed by Gly257.

The protein belongs to the shikimate dehydrogenase family. Homodimer.

The catalysed reaction is shikimate + NADP(+) = 3-dehydroshikimate + NADPH + H(+). It functions in the pathway metabolic intermediate biosynthesis; chorismate biosynthesis; chorismate from D-erythrose 4-phosphate and phosphoenolpyruvate: step 4/7. Functionally, involved in the biosynthesis of the chorismate, which leads to the biosynthesis of aromatic amino acids. Catalyzes the reversible NADPH linked reduction of 3-dehydroshikimate (DHSA) to yield shikimate (SA). This chain is Shikimate dehydrogenase (NADP(+)), found in Chlorobaculum tepidum (strain ATCC 49652 / DSM 12025 / NBRC 103806 / TLS) (Chlorobium tepidum).